We begin with the raw amino-acid sequence, 253 residues long: Ubiquinone/menaquinone biosynthesis C-methyltransferase UbiE (253 aa).

S-adenosyl-L-methionine is bound by residues threonine 76, aspartate 97, and 125–126 (NA).

Belongs to the class I-like SAM-binding methyltransferase superfamily. MenG/UbiE family.

The enzyme catalyses a 2-demethylmenaquinol + S-adenosyl-L-methionine = a menaquinol + S-adenosyl-L-homocysteine + H(+). The catalysed reaction is a 2-methoxy-6-(all-trans-polyprenyl)benzene-1,4-diol + S-adenosyl-L-methionine = a 5-methoxy-2-methyl-3-(all-trans-polyprenyl)benzene-1,4-diol + S-adenosyl-L-homocysteine + H(+). Its pathway is quinol/quinone metabolism; menaquinone biosynthesis; menaquinol from 1,4-dihydroxy-2-naphthoate: step 2/2. The protein operates within cofactor biosynthesis; ubiquinone biosynthesis. Functionally, methyltransferase required for the conversion of demethylmenaquinol (DMKH2) to menaquinol (MKH2) and the conversion of 2-polyprenyl-6-methoxy-1,4-benzoquinol (DDMQH2) to 2-polyprenyl-3-methyl-6-methoxy-1,4-benzoquinol (DMQH2). The protein is Ubiquinone/menaquinone biosynthesis C-methyltransferase UbiE of Rhodopseudomonas palustris (strain ATCC BAA-98 / CGA009).